We begin with the raw amino-acid sequence, 593 residues long: Elongation factor 4 (593 aa).

The tr-type G domain maps to 2–181 (KNIRNFCIIA…AVVERIPHPT (180 aa)). GTP contacts are provided by residues 14–19 (DHGKST) and 128–131 (NKCD).

It belongs to the TRAFAC class translation factor GTPase superfamily. Classic translation factor GTPase family. LepA subfamily.

Its subcellular location is the cell inner membrane. The catalysed reaction is GTP + H2O = GDP + phosphate + H(+). Its function is as follows. Required for accurate and efficient protein synthesis under certain stress conditions. May act as a fidelity factor of the translation reaction, by catalyzing a one-codon backward translocation of tRNAs on improperly translocated ribosomes. Back-translocation proceeds from a post-translocation (POST) complex to a pre-translocation (PRE) complex, thus giving elongation factor G a second chance to translocate the tRNAs correctly. Binds to ribosomes in a GTP-dependent manner. The protein is Elongation factor 4 of Phocaeicola vulgatus (strain ATCC 8482 / DSM 1447 / JCM 5826 / CCUG 4940 / NBRC 14291 / NCTC 11154) (Bacteroides vulgatus).